Reading from the N-terminus, the 359-residue chain is Ni-sirohydrochlorin a,c-diamide reductive cyclase complex, component CfbD (359 aa).

The protein belongs to the NifD/NifK/NifE/NifN family. As to quaternary structure, homodimer or monomer. The Ni-sirohydrochlorin a,c-diamide reductive cyclase complex is composed of a NifH homolog component CfbC and a NifD homolog component CfbD. Requires [4Fe-4S] cluster as cofactor.

The catalysed reaction is Ni-sirohydrochlorin a,c-diamide + 3 AH2 + ATP + H2O = 15,17(3)-seco-F430-17(3)-acid + 3 A + ADP + phosphate. Its function is as follows. Involved in the biosynthesis of the unique nickel-containing tetrapyrrole coenzyme F430, the prosthetic group of methyl-coenzyme M reductase (MCR), which plays a key role in methanogenesis and anaerobic methane oxidation. Catalyzes both the six-electron reduction of the tetrahydroporphyrin ring system and the gamma-lactamization of the c-acetamide side chain of Ni-sirohydrochlorin a,c-diamide to yield 15,17(3)-seco-F430-17(3)-acid (seco-F430), the last intermediate in the biosynthesis of the coenzyme F430. This chain is Ni-sirohydrochlorin a,c-diamide reductive cyclase complex, component CfbD, found in Methanothermobacter thermautotrophicus (strain ATCC 29096 / DSM 1053 / JCM 10044 / NBRC 100330 / Delta H) (Methanobacterium thermoautotrophicum).